A 371-amino-acid polypeptide reads, in one-letter code: MAFKQLFAAITVALSLTAANAAVVKEKRATCANGKTVGDASCCAWFDVLDDIQANMFHGGQCGAEAHESIRLVFHDSIAISPAMEAKGKFGGGGADGSIMIFDTIETAFHPNIGLDEVVAMQKPFVQKHGVTPGDFIAFAGAVALSNCPGAPQMNFFTGRKPATQPAPDGLVPEPFHTVDQIIARVNDAGEFDELELVWMLSAHSVAAVNDVDPTVQGLPFDSTPGIFDSQFFVETQFRGTLFPGSGGNQGEVESGMAGEIRIQTDHTLARDSRTACEWQSFVGNQSKLVDDFQFIFLALTQLGQDPNAMTDCSDVIPLSKPIPGNGPFSFFPPGKSHSDIEQACAETPFPSLVTLPGPATSVARIPPHKA.

A signal peptide spans Met-1 to Ala-21. Residues Ala-22–Arg-28 constitute a propeptide that is removed on maturation. Cystine bridges form between Cys-31/Cys-43, Cys-42/Cys-313, Cys-62/Cys-148, and Cys-277/Cys-345. His-75 acts as the Proton acceptor in catalysis. Residues Asp-76, Gly-94, Asp-96, and Ser-98 each contribute to the Ca(2+) site. Trp-199 carries the post-translational modification 3-hydroxytryptophan. A heme b-binding site is contributed by His-204. The Ca(2+) site is built by Ser-205, Asp-222, Thr-224, Ile-227, and Asp-229. Asn-285 is a glycosylation site (N-linked (GlcNAc...) asparagine).

The protein belongs to the peroxidase family. Ligninase subfamily. Ca(2+) serves as cofactor. Requires heme b as cofactor.

The catalysed reaction is 1-(3,4-dimethoxyphenyl)-2-(2-methoxyphenoxy)propane-1,3-diol + H2O2 = 3,4-dimethoxybenzaldehyde + guaiacol + glycolaldehyde + H2O. The enzyme catalyses 2 (3,4-dimethoxyphenyl)methanol + H2O2 = 2 (3,4-dimethoxyphenyl)methanol radical + 2 H2O. It participates in secondary metabolite metabolism; lignin degradation. In terms of biological role, depolymerization of lignin. Catalyzes the C(alpha)-C(beta) cleavage of the propyl side chains of lignin. This chain is Ligninase LG2 (GLG2), found in Phanerodontia chrysosporium (White-rot fungus).